The primary structure comprises 460 residues: Bifunctional protein GlmU (460 aa).

The pyrophosphorylase stretch occupies residues 1-233 (MLDIVIMAAG…ETEVLGVNSP (233 aa)). UDP-N-acetyl-alpha-D-glucosamine-binding positions include K21, Q76, and 81 to 82 (GT). D105 provides a ligand contact to Mg(2+). UDP-N-acetyl-alpha-D-glucosamine is bound by residues G140, E158, and N231. N231 lines the Mg(2+) pocket. Positions 234-254 (LQLADLERRLQRKQAEALLEA) are linker. Residues 255-460 (GVRLADPARF…AGWQRPQKKR (206 aa)) are N-acetyltransferase. R337 and K355 together coordinate UDP-N-acetyl-alpha-D-glucosamine. Residue H367 is the Proton acceptor of the active site. Residues Y370 and N381 each coordinate UDP-N-acetyl-alpha-D-glucosamine. Acetyl-CoA contacts are provided by residues A384, 390-391 (NY), S409, G427, and R444.

This sequence in the N-terminal section; belongs to the N-acetylglucosamine-1-phosphate uridyltransferase family. The protein in the C-terminal section; belongs to the transferase hexapeptide repeat family. As to quaternary structure, homotrimer. It depends on Mg(2+) as a cofactor.

The protein localises to the cytoplasm. It carries out the reaction alpha-D-glucosamine 1-phosphate + acetyl-CoA = N-acetyl-alpha-D-glucosamine 1-phosphate + CoA + H(+). The enzyme catalyses N-acetyl-alpha-D-glucosamine 1-phosphate + UTP + H(+) = UDP-N-acetyl-alpha-D-glucosamine + diphosphate. It functions in the pathway nucleotide-sugar biosynthesis; UDP-N-acetyl-alpha-D-glucosamine biosynthesis; N-acetyl-alpha-D-glucosamine 1-phosphate from alpha-D-glucosamine 6-phosphate (route II): step 2/2. The protein operates within nucleotide-sugar biosynthesis; UDP-N-acetyl-alpha-D-glucosamine biosynthesis; UDP-N-acetyl-alpha-D-glucosamine from N-acetyl-alpha-D-glucosamine 1-phosphate: step 1/1. It participates in bacterial outer membrane biogenesis; LPS lipid A biosynthesis. Functionally, catalyzes the last two sequential reactions in the de novo biosynthetic pathway for UDP-N-acetylglucosamine (UDP-GlcNAc). The C-terminal domain catalyzes the transfer of acetyl group from acetyl coenzyme A to glucosamine-1-phosphate (GlcN-1-P) to produce N-acetylglucosamine-1-phosphate (GlcNAc-1-P), which is converted into UDP-GlcNAc by the transfer of uridine 5-monophosphate (from uridine 5-triphosphate), a reaction catalyzed by the N-terminal domain. The protein is Bifunctional protein GlmU of Methylibium petroleiphilum (strain ATCC BAA-1232 / LMG 22953 / PM1).